Reading from the N-terminus, the 115-residue chain is Salivary anti-complement protein (115 aa).

Positions 1–22 (MKFFYLIFSAIFFLADPALVKC) are cleaved as a signal peptide. 3 cysteine pairs are disulfide-bonded: Cys-26–Cys-108, Cys-41–Cys-92, and Cys-83–Cys-101.

In terms of assembly, may form multimers. As to expression, salivary gland (at protein level).

The protein localises to the secreted. Its function is as follows. Salivary protein that inhibits the classical pathway of complement system activation in the host while having no inhibitory effect on the alternative or lectin pathways. Prevent cleavage of host C4 and consequently impairs the activation of factors downstream of C4b in the complement cascade. The sequence is that of Salivary anti-complement protein from Lutzomyia longipalpis (Sand fly).